The sequence spans 113 residues: Colipase (113 aa).

The N-terminal stretch at 1-18 is a signal peptide; that stretch reads MEKVLVLLLVSLLAVAYA. Residues 19–23 constitute a propeptide, enterostatin, activation peptide; it reads APGPR. 5 disulfide bridges follow: Cys-35–Cys-46, Cys-41–Cys-57, Cys-45–Cys-79, Cys-67–Cys-87, and Cys-81–Cys-105.

Belongs to the colipase family. As to quaternary structure, forms a 1:1 stoichiometric complex with pancreatic lipase. As to expression, expressed by the pancreas.

The protein localises to the secreted. Functionally, colipase is a cofactor of pancreatic lipase. It allows the lipase to anchor itself to the lipid-water interface. Without colipase the enzyme is washed off by bile salts, which have an inhibitory effect on the lipase. Its function is as follows. Enterostatin has a biological activity as a satiety signal. The protein is Colipase of Mus musculus (Mouse).